We begin with the raw amino-acid sequence, 102 residues long: Vacuolar ATPase assembly integral membrane protein VMA21 (102 aa).

Topologically, residues Met-1–Thr-30 are cytoplasmic. The chain crosses the membrane as a helical span at residues Leu-31–Ala-51. The Lumenal portion of the chain corresponds to Tyr-52–Tyr-66. The chain crosses the membrane as a helical span at residues Phe-67–Val-87. At Ala-88–Asp-102 the chain is on the cytoplasmic side.

The protein belongs to the VMA21 family. As to quaternary structure, associates with the V0 complex of the vacuolar ATPase (V-ATPase). Interacts with ATP6AP2.

The protein localises to the endoplasmic reticulum membrane. Its subcellular location is the endoplasmic reticulum-Golgi intermediate compartment membrane. It localises to the cytoplasmic vesicle. It is found in the COPII-coated vesicle membrane. Required for the assembly of the V0 complex of the vacuolar ATPase (V-ATPase) in the endoplasmic reticulum. In Gallus gallus (Chicken), this protein is Vacuolar ATPase assembly integral membrane protein VMA21.